The sequence spans 257 residues: Capsid protein (257 aa).

The short motif at 3 to 20 (KRNYDTAFSTPMSNVRRR) is the Bipartite nuclear localization signal element. The short motif at 41–55 (KRRRWTNRPMWRKPR) is the Nuclear localization signal element. The segment at 69 to 86 (CEGPCKVQSFEAKHDISH) is a zinc-finger region. A Nuclear export signal motif is present at residues 102–123 (ITHRVGKRFCVKSIWVTGKIWM). Positions 201-248 (SKFYRVNNYVVYNHQEAAKYENHTENALLLYMACTHASNPVYATLKIR) match the Bipartite nuclear localization signal motif.

This sequence belongs to the geminiviridae capsid protein family. In terms of assembly, homomultimer. Binds to single-stranded and double-stranded viral DNA. Interacts (via nuclear localization signals) with host importin alpha-1a.

The protein localises to the virion. It localises to the host nucleus. Encapsidates the viral DNA into characteristic twinned ('geminate') particles. Binds the genomic viral ssDNA and shuttles it into and out of the cell nucleus. The CP of bipartite geminiviruses is not required for cell-to-cell or systemic movement. In Glycine max (Soybean), this protein is Capsid protein.